The primary structure comprises 120 residues: Large ribosomal subunit protein eL8 (120 aa).

Belongs to the eukaryotic ribosomal protein eL8 family. As to quaternary structure, part of the 50S ribosomal subunit. Probably part of the RNase P complex.

The protein resides in the cytoplasm. Functionally, multifunctional RNA-binding protein that recognizes the K-turn motif in ribosomal RNA, the RNA component of RNase P, box H/ACA, box C/D and box C'/D' sRNAs. In Halobacterium salinarum (strain ATCC 29341 / DSM 671 / R1), this protein is Large ribosomal subunit protein eL8.